The primary structure comprises 89 residues: Small ribosomal subunit protein uS14A (89 aa).

This sequence belongs to the universal ribosomal protein uS14 family. In terms of assembly, part of the 30S ribosomal subunit. Contacts proteins S3 and S10.

Binds 16S rRNA, required for the assembly of 30S particles and may also be responsible for determining the conformation of the 16S rRNA at the A site. The chain is Small ribosomal subunit protein uS14A from Listeria monocytogenes serotype 4b (strain F2365).